The following is a 527-amino-acid chain: MRLAFWLYEGTALHGISRITNSMKGVHTVYHAPQGDDYITATYTMLERTPEFPALSISVVRGRDLAQGVSRLPATLQQVEHHYHPELTVIAPSCSTALLQEDLRQLAAHSGVAQEKLMVYAVNPFRVTENEAADGLFTELVKRYAANGQKSAVPAVNLLGFTSLGFHLKANLTSLRRMLSTLGVKVNVVAPWGAGIADLARLPEAWLNIAPYHEIGRTAAEYLEQEFAMPAVYDTPIGVEPTLRWLRSIIEKLNEVGAGCGASPISMPALHDFSLDGMSAPSGVPWFARTADMESFSNKKAFVFADATTTVAMVKFLRDELGMKVVGAGTYLERDADWVRRELEGYLPGELMVTDRFQDVAKVIEDELPDLVCGTQMERHSCRKLDIPCMVVSPPTHIENHLLGYYPFFGFDGADVIADRVYLSCKLGLEKHLIDFFGDAGLEYEDGDAADETGVAAAAANGHSPAGGSTEGEGGMVWTGEAETMLKKVPFFVRKKVRKNTETFAMEQGEGEVTVEVFRRAKDSLGG.

[4Fe-4S] cluster is bound at residue Asp36. Asp292 serves as the catalytic Proton donor. 428-429 (GL) serves as a coordination point for substrate.

It belongs to the ChlB/BchB/BchZ family. As to quaternary structure, protochlorophyllide reductase is composed of three subunits; BchL, BchN and BchB. Forms a heterotetramer of two BchB and two BchN subunits. It depends on [4Fe-4S] cluster as a cofactor.

The catalysed reaction is chlorophyllide a + oxidized 2[4Fe-4S]-[ferredoxin] + 2 ADP + 2 phosphate = protochlorophyllide a + reduced 2[4Fe-4S]-[ferredoxin] + 2 ATP + 2 H2O. The protein operates within porphyrin-containing compound metabolism; bacteriochlorophyll biosynthesis (light-independent). Its function is as follows. Component of the dark-operative protochlorophyllide reductase (DPOR) that uses Mg-ATP and reduced ferredoxin to reduce ring D of protochlorophyllide (Pchlide) to form chlorophyllide a (Chlide). This reaction is light-independent. The NB-protein (BchN-BchB) is the catalytic component of the complex. The protein is Light-independent protochlorophyllide reductase subunit B of Chlorobium phaeovibrioides (strain DSM 265 / 1930) (Prosthecochloris vibrioformis (strain DSM 265)).